Here is a 399-residue protein sequence, read N- to C-terminus: Ribose-phosphate pyrophosphokinase 2, chloroplastic (399 aa).

The transit peptide at 1–32 (MAAKAAALSSSPFVSSRRLSSPAASLRARTPR) directs the protein to the chloroplast. Mg(2+) is bound by residues aspartate 214, histidine 216, aspartate 225, and aspartate 229. The interval 299–314 (GKVAIMVDDMIDTAGT) is binding of phosphoribosylpyrophosphate.

It belongs to the ribose-phosphate pyrophosphokinase family. The cofactor is Mg(2+).

The protein resides in the plastid. It localises to the chloroplast. The enzyme catalyses D-ribose 5-phosphate + ATP = 5-phospho-alpha-D-ribose 1-diphosphate + AMP + H(+). In Oryza sativa subsp. japonica (Rice), this protein is Ribose-phosphate pyrophosphokinase 2, chloroplastic.